Reading from the N-terminus, the 426-residue chain is Citrate synthase (426 aa).

Catalysis depends on residues histidine 314 and aspartate 372.

It belongs to the citrate synthase family.

It catalyses the reaction oxaloacetate + acetyl-CoA + H2O = citrate + CoA + H(+). The protein operates within carbohydrate metabolism; tricarboxylic acid cycle; isocitrate from oxaloacetate: step 1/2. This chain is Citrate synthase (gltA), found in Helicobacter pylori (strain J99 / ATCC 700824) (Campylobacter pylori J99).